The following is an 82-amino-acid chain: Small ribosomal subunit protein bS18 (82 aa).

It belongs to the bacterial ribosomal protein bS18 family. Part of the 30S ribosomal subunit. Forms a tight heterodimer with protein bS6.

Its function is as follows. Binds as a heterodimer with protein bS6 to the central domain of the 16S rRNA, where it helps stabilize the platform of the 30S subunit. The chain is Small ribosomal subunit protein bS18 from Methylobacterium nodulans (strain LMG 21967 / CNCM I-2342 / ORS 2060).